The sequence spans 186 residues: dCTP deaminase (186 aa).

107 to 112 (KSTYAR) contacts dCTP. The active-site Proton donor/acceptor is glutamate 133. DCTP is bound by residues glutamine 152, tyrosine 166, and glutamine 176.

The protein belongs to the dCTP deaminase family. Homotrimer.

The catalysed reaction is dCTP + H2O + H(+) = dUTP + NH4(+). The protein operates within pyrimidine metabolism; dUMP biosynthesis; dUMP from dCTP (dUTP route): step 1/2. Its function is as follows. Catalyzes the deamination of dCTP to dUTP. In Campylobacter fetus subsp. fetus (strain 82-40), this protein is dCTP deaminase.